The primary structure comprises 402 residues: MEYQSGKRVLSLSLGLIGLFSASAFASDSRTVSEPKAPSSCTVLKADSSTATSTIQKALNNCGQGKAVKLSAGSSSVFLSGPLSLPSGVSLLIDKGVTLRAVNNAKSFENAPSSCGVVDTNGKGCDAFITATSTTNSGIYGPGTIDGQGGVKLQDKKVSWWDLAADAKVKKLKQNTPRLIQINKSKNFTLYNVSLINSPNFHVVFSDGDGFTAWKTTIKTPSTARNTDGIDPMSSKNITIAHSNISTGDDNVAIKAYKGRSETRNISILHNEFGTGHGMSIGSETMGVYNVTVDDLIMTGTTNGLRIKSDKSAAGVVNGVRYSNVVMKNVAKPIVIDTVYEKKEGSNVPDWSDITFKDITSQTKGVVVLNGENAKKPIEVTMKNVKLTSDSTWQIKNVTVKK.

An N-terminal signal peptide occupies residues 1 to 23 (MEYQSGKRVLSLSLGLIGLFSAS). The active-site Proton donor is the Asp249. Residue His277 is part of the active site.

The protein belongs to the glycosyl hydrolase 28 family. Monomer.

It is found in the secreted. The catalysed reaction is (1,4-alpha-D-galacturonosyl)n+m + H2O = (1,4-alpha-D-galacturonosyl)n + (1,4-alpha-D-galacturonosyl)m.. Its function is as follows. Involved in maceration and soft-rotting of plant tissue. The polypeptide is Endo-polygalacturonase (peh) (Pectobacterium carotovorum subsp. carotovorum (Erwinia carotovora subsp. carotovora)).